We begin with the raw amino-acid sequence, 411 residues long: Na(+)-translocating NADH-quinone reductase subunit B (411 aa).

A run of 3 helical transmembrane segments spans residues Met-56–Gly-76, Ala-120–Trp-140, and Ile-166–Val-186. FMN phosphoryl threonine is present on Thr-233. The next 5 membrane-spanning stretches (helical) occupy residues Val-272–Trp-292, Ile-294–Ser-314, Met-319–Phe-339, Ser-348–Ile-368, and Gly-378–Val-398.

It belongs to the NqrB/RnfD family. As to quaternary structure, composed of six subunits; NqrA, NqrB, NqrC, NqrD, NqrE and NqrF. FMN serves as cofactor.

The protein localises to the cell inner membrane. The catalysed reaction is a ubiquinone + n Na(+)(in) + NADH + H(+) = a ubiquinol + n Na(+)(out) + NAD(+). NQR complex catalyzes the reduction of ubiquinone-1 to ubiquinol by two successive reactions, coupled with the transport of Na(+) ions from the cytoplasm to the periplasm. NqrA to NqrE are probably involved in the second step, the conversion of ubisemiquinone to ubiquinol. The polypeptide is Na(+)-translocating NADH-quinone reductase subunit B (Haemophilus influenzae (strain 86-028NP)).